We begin with the raw amino-acid sequence, 449 residues long: MGRSRHHNKLKEGIFEAEITALSHDGRGIAKVDGKTTFIPFTLPGEVVKFEYTFTKAKFDEAKVVEYVKKSSNRVNPPCDHFQICRGCSLQHMSTDAQIEHKQQTLINQLKYIGNGVEPENILPPLRTSNTEGYRNKARLGVRYVSKKGKILVGFRERNGRFLADIDKCIVLNPLVGDKITEISSFIETLSIYQHIAQLEIAIDDTRPAMIVRHLEPFTNEDLEKLRSFAQENNYWIYLQSKGPDTIFRLYPQGDVEPKKLSYQPAAGIDIGFEPNDFTQVNNDINKKMIKRAIELLDISENDSIIDLFCGLGNFTLPISQHAKTVIGVEGEPTMVKRAKETADNNNITNVNFYAANLFESFEDKEWFNNFEYNKMLLDPPRAGAQEVCNNIEKFNVKRIVYVSCDTAALARDAGILVNTKGYKLISAGVMDMFPHTMHVESIAVFEKI.

One can recognise a TRAM domain in the interval 1–66 (MGRSRHHNKL…AKFDEAKVVE (66 aa)). [4Fe-4S] cluster is bound by residues cysteine 79, cysteine 85, cysteine 88, and cysteine 169. Positions 280, 309, 314, 330, 357, and 379 each coordinate S-adenosyl-L-methionine. Cysteine 405 serves as the catalytic Nucleophile.

Belongs to the class I-like SAM-binding methyltransferase superfamily. RNA M5U methyltransferase family. RlmD subfamily.

The catalysed reaction is uridine(1939) in 23S rRNA + S-adenosyl-L-methionine = 5-methyluridine(1939) in 23S rRNA + S-adenosyl-L-homocysteine + H(+). Its function is as follows. Catalyzes the formation of 5-methyl-uridine at position 1939 (m5U1939) in 23S rRNA. The protein is 23S rRNA (uracil(1939)-C(5))-methyltransferase RlmD of Francisella tularensis subsp. tularensis (strain FSC 198).